Here is a 334-residue protein sequence, read N- to C-terminus: Probable quinone oxidoreductase (334 aa).

Belongs to the zinc-containing alcohol dehydrogenase family. Quinone oxidoreductase subfamily.

It carries out the reaction 2 a quinone + NADPH + H(+) = 2 a 1,4-benzosemiquinone + NADP(+). This Saccharomyces cerevisiae (strain ATCC 204508 / S288c) (Baker's yeast) protein is Probable quinone oxidoreductase (ZTA1).